The primary structure comprises 117 residues: Putative membrane protein insertion efficiency factor (117 aa).

The protein belongs to the UPF0161 family.

The protein localises to the cell inner membrane. Could be involved in insertion of integral membrane proteins into the membrane. This is Putative membrane protein insertion efficiency factor from Nitrobacter winogradskyi (strain ATCC 25391 / DSM 10237 / CIP 104748 / NCIMB 11846 / Nb-255).